Here is a 1454-residue protein sequence, read N- to C-terminus: Mediator of RNA polymerase II transcription subunit 14 (1454 aa).

A disordered region spans residues M1–G34. The span at P14 to G23 shows a compositional bias: gly residues. A compositionally biased stretch (pro residues) spans P25–G34. The LXXLL motif 1 signature appears at L69–L73. An interaction with STAT2 region spans residues K188 to Y566. Residues L500–W824 are interaction with SREBF1. 2 positions are modified to phosphoserine: S617 and S986. Positions A973 to R1167 are disordered. The segment covering Q1001–K1011 has biased composition (pro residues). Composition is skewed to polar residues over residues P1024–S1054 and D1092–S1101. Phosphoserine occurs at positions 1112, 1119, 1128, 1136, and 1144. Positions A1147–T1156 are enriched in polar residues. The LXXLL motif 2 motif lies at L1182–L1186.

Belongs to the Mediator complex subunit 14 family. As to quaternary structure, interacts with GATA1. Component of the Mediator complex, which is composed of MED1, MED4, MED6, MED7, MED8, MED9, MED10, MED11, MED12, MED13, MED13L, MED14, MED15, MED16, MED17, MED18, MED19, MED20, MED21, MED22, MED23, MED24, MED25, MED26, MED27, MED29, MED30, MED31, CCNC, CDK8 and CDC2L6/CDK11. The MED12, MED13, CCNC and CDK8 subunits form a distinct module termed the CDK8 module. Mediator containing the CDK8 module is less active than Mediator lacking this module in supporting transcriptional activation. Individual preparations of the Mediator complex lacking one or more distinct subunits have been variously termed ARC, CRSP, DRIP, PC2, SMCC and TRAP. Interacts with AR, ESR1, SREBF1 and STAT2. In terms of tissue distribution, ubiquitous.

The protein resides in the nucleus. Its function is as follows. Component of the Mediator complex, a coactivator involved in the regulated transcription of nearly all RNA polymerase II-dependent genes. Mediator functions as a bridge to convey information from gene-specific regulatory proteins to the basal RNA polymerase II transcription machinery. Mediator is recruited to promoters by direct interactions with regulatory proteins and serves as a scaffold for the assembly of a functional preinitiation complex with RNA polymerase II and the general transcription factors. The polypeptide is Mediator of RNA polymerase II transcription subunit 14 (MED14) (Homo sapiens (Human)).